An 847-amino-acid polypeptide reads, in one-letter code: Glucans biosynthesis glucosyltransferase H (847 aa).

At 1 to 138 (MNKTTEYIDA…KWRTVGTIRR (138 aa)) the chain is on the cytoplasmic side. The helical transmembrane segment at 139–156 (YILLILTLAQTVVATWYM) threads the bilayer. At 157-193 (KTILPYQGWALINPMDMVGQDIWVSFMQLLPYMLQTG) the chain is on the periplasmic side. The chain crosses the membrane as a helical span at residues 194 to 216 (ILILFAVLFCWVSAGFWTALMGF). Over 217-511 (LQLLIGRDKY…LVKGMHPVHR (295 aa)) the chain is Cytoplasmic. The helical transmembrane segment at 512–534 (AVFLTGVMSYLSAPLWFMFLALS) threads the bilayer. Topologically, residues 535-567 (TALQVVHALTEPQYFLQPRQLFPVWPQWRPELA) are periplasmic. The chain crosses the membrane as a helical span at residues 568 to 590 (IALFASTMVLLFLPKLLSIMLIW). Topologically, residues 591 to 602 (CKGTKEYGGFWR) are cytoplasmic. The chain crosses the membrane as a helical span at residues 603–625 (VTLSLLLEVLFSVLLAPVRMLFH). At 626-679 (TVFVVSAFLGWEVVWNSPQRDDDSTPWGEAFMRHGSQLLLGLVWAVGMAWLDLR) the chain is on the periplasmic side. A helical membrane pass occupies residues 680 to 702 (FLFWLAPIVFSLILSPFVSVISS). Residues 703–847 (RSTVGLRTKR…ALQGRTSSAR (145 aa)) are Cytoplasmic-facing.

The protein belongs to the glycosyltransferase 2 family. OpgH subfamily.

The protein resides in the cell inner membrane. It functions in the pathway glycan metabolism; osmoregulated periplasmic glucan (OPG) biosynthesis. In terms of biological role, involved in the biosynthesis of osmoregulated periplasmic glucans (OPGs). In Salmonella typhimurium (strain LT2 / SGSC1412 / ATCC 700720), this protein is Glucans biosynthesis glucosyltransferase H.